The primary structure comprises 341 residues: Ribosomal RNA small subunit methyltransferase H (341 aa).

Residues 47–49 (GGY), aspartate 64, phenylalanine 91, aspartate 109, and glutamine 116 each bind S-adenosyl-L-methionine.

This sequence belongs to the methyltransferase superfamily. RsmH family.

It is found in the cytoplasm. The enzyme catalyses cytidine(1402) in 16S rRNA + S-adenosyl-L-methionine = N(4)-methylcytidine(1402) in 16S rRNA + S-adenosyl-L-homocysteine + H(+). In terms of biological role, specifically methylates the N4 position of cytidine in position 1402 (C1402) of 16S rRNA. The chain is Ribosomal RNA small subunit methyltransferase H from Agrobacterium fabrum (strain C58 / ATCC 33970) (Agrobacterium tumefaciens (strain C58)).